A 126-amino-acid chain; its full sequence is Large ribosomal subunit protein bL20c (126 aa).

It belongs to the bacterial ribosomal protein bL20 family.

The protein resides in the plastid. It localises to the chloroplast. Functionally, binds directly to 23S ribosomal RNA and is necessary for the in vitro assembly process of the 50S ribosomal subunit. It is not involved in the protein synthesizing functions of that subunit. This chain is Large ribosomal subunit protein bL20c, found in Lactuca sativa (Garden lettuce).